Consider the following 544-residue polypeptide: Chaperonin GroEL (544 aa).

Residues T30–P33, K51, D87–T91, G415, and D495 contribute to the ATP site.

Belongs to the chaperonin (HSP60) family. Forms a cylinder of 14 subunits composed of two heptameric rings stacked back-to-back. Interacts with the co-chaperonin GroES.

The protein resides in the cytoplasm. It carries out the reaction ATP + H2O + a folded polypeptide = ADP + phosphate + an unfolded polypeptide.. Functionally, together with its co-chaperonin GroES, plays an essential role in assisting protein folding. The GroEL-GroES system forms a nano-cage that allows encapsulation of the non-native substrate proteins and provides a physical environment optimized to promote and accelerate protein folding. The chain is Chaperonin GroEL from Aeromonas salmonicida.